We begin with the raw amino-acid sequence, 748 residues long: MVAVFHGPLVLGALLLLLALQHGASAEEPGFANRTGVHVAFLTDCQMYSDWQSVGAAFSFKMSGQPGSVIRVMCCSEEQAKNYNKGLLGMVDTWVAPDATHSKRTGDRYAAYNKPEAVIDWLDHNVPKHDYVLVLDSDMVLRRPFFVENMGPRKGLAVGARYTYMIGVANELAVRHIPHVPPRNDTLAGPFGRRADQVGGFFFIHKDDLKAMSHDWLKFSEDVRVDDQAYRLSGDVYAIHPGDRPWISEMYGYAFGAANHNVWHKWDTFSMIYPGYEPREGIPKLMHYGLLFEIGKNYSFDKHWHYDFDVTVCPPWDLKDPKRRTHGIFPEPPRPSSLRKVFPKNGDMASMDDFIGYYKELLAIETLATLNAAFCDYHISHCPPSEQLVSVCKEVFSLYNEAREFIQEAEASYDCQDFHPKCEEWKESGECTKNENYMTENCRKTCDKCNKIEKFFPETTTKELEEKLAKMSKELQPLSEDPDNKAGAGSAPKTESPLVIPKQEQPVAIIPRNEVPPKQEVRASSPAMQSSPPPSPPPASPPPVDSPPPMSPPPESPSPDKPPPKVVTRKALADPKKVTQKALMVRCYKLSLGIDEVKDCVKAAKEGKEYEVPKRTKATDEEEEAPKAKHAESHLTLDGEGATTESANDEVAKTKAPDASAEGNEGKKNIRVVQRDLEDLSLTQGDGKKGKAPVIDAPVVGPSLHSLLGRLNTWQALVLWLVVVVAFLALVPRIAKLRRRQRSGMRTE.

An N-terminal signal peptide occupies residues 1-26 (MVAVFHGPLVLGALLLLLALQHGASA). At 27 to 710 (EEPGFANRTG…GPSLHSLLGR (684 aa)) the chain is on the extracellular side. N-linked (GlcNAc...) asparagine glycosylation is found at asparagine 33, asparagine 184, and asparagine 297. Positions 415-449 (CQDFHPKCEEWKESGECTKNENYMTENCRKTCDKC) constitute a ShKT domain. Disulfide bonds link cysteine 415-cysteine 449, cysteine 422-cysteine 442, and cysteine 431-cysteine 446. Disordered stretches follow at residues 474–576 (ELQP…ADPK) and 611–670 (EVPK…KKNI). A compositionally biased stretch (pro residues) spans 531–565 (SPPPSPPPASPPPVDSPPPMSPPPESPSPDKPPPK). Basic and acidic residues predominate over residues 611 to 637 (EVPKRTKATDEEEEAPKAKHAESHLTL). Residues 711–731 (LNTWQALVLWLVVVVAFLALV) traverse the membrane as a helical segment. At 732–748 (PRIAKLRRRQRSGMRTE) the chain is on the cytoplasmic side.

Mn(2+) serves as cofactor.

It localises to the membrane. Functionally, glycosyltransferase involved in the O-galactosylation of several proteins including extensins. Catalyzes the transfer of alpha-galactosyl to Ser residues. Hydroxylation of proline residues adjacent to the serine acceptor is required for activity. Utilizes selectively UDP-galactose as a donor nucleotide sugar. This is Peptidyl serine alpha-galactosyltransferase from Chlamydomonas reinhardtii (Chlamydomonas smithii).